The following is a 484-amino-acid chain: Glycogen synthase 2 (484 aa).

K15 provides a ligand contact to ADP-alpha-D-glucose.

It belongs to the glycosyltransferase 1 family. Bacterial/plant glycogen synthase subfamily.

The catalysed reaction is [(1-&gt;4)-alpha-D-glucosyl](n) + ADP-alpha-D-glucose = [(1-&gt;4)-alpha-D-glucosyl](n+1) + ADP + H(+). Its pathway is glycan biosynthesis; glycogen biosynthesis. Synthesizes alpha-1,4-glucan chains using ADP-glucose. The chain is Glycogen synthase 2 from Geobacter metallireducens (strain ATCC 53774 / DSM 7210 / GS-15).